Here is a 223-residue protein sequence, read N- to C-terminus: Phage shock protein A homolog (223 aa).

Residues 29-185 adopt a coiled-coil conformation; it reads IDQALRDMRS…AGMEDRNKAM (157 aa).

The protein belongs to the PspA/Vipp/IM30 family.

The sequence is that of Phage shock protein A homolog from Deinococcus radiodurans (strain ATCC 13939 / DSM 20539 / JCM 16871 / CCUG 27074 / LMG 4051 / NBRC 15346 / NCIMB 9279 / VKM B-1422 / R1).